The following is a 258-amino-acid chain: Thyroxine 5-deiodinase (258 aa).

The helical; Signal-anchor for type II membrane protein transmembrane segment at 1–20 (AACILLFPRFLLTAVMLWLL) threads the bilayer. Over 21–258 (DFLCIRKKML…QSPGAVVIQV (238 aa)) the chain is Extracellular. The active site involves selenocysteine 122. Position 122 (selenocysteine 122) is a non-standard amino acid, selenocysteine.

Belongs to the iodothyronine deiodinase family. As to quaternary structure, monomer. Homodimer. May undergo minor heretodimerization with DIO1 and DIO2.

The protein localises to the cell membrane. Its subcellular location is the endosome membrane. The catalysed reaction is 3,3',5'-triiodo-L-thyronine + iodide + A + H(+) = L-thyroxine + AH2. It carries out the reaction 3,3'-diiodo-L-thyronine + iodide + A + H(+) = 3,3',5-triiodo-L-thyronine + AH2. The enzyme catalyses 3-iodo-L-thyronine + iodide + A + H(+) = 3,5-diiodo-L-thyronine + AH2. It catalyses the reaction L-thyronine + iodide + A + H(+) = 3-iodo-L-thyronine + AH2. The catalysed reaction is 3',5'-diiodo-L-thyronine + iodide + A + H(+) = 3,3',5'-triiodo-L-thyronine + AH2. It carries out the reaction 3'-iodo-L-thyronine + iodide + A + H(+) = 3,3'-diiodo-L-thyronine + AH2. The enzyme catalyses 3,3',5'-triiodothyronamine + iodide + A + H(+) = 3,3',5,5'-tetraiodothyronamine + AH2. It catalyses the reaction 3',5'-diiodothyronamine + iodide + A + H(+) = 3,3',5'-triiodothyronamine + AH2. The catalysed reaction is 3,3'-diiodothyronamine + iodide + A + H(+) = 3,3',5-triiodothyronamine + AH2. It carries out the reaction 3-iodothyronamine + iodide + A + H(+) = 3,5-diiodothyronamine + AH2. The enzyme catalyses 3'-iodothyronamine + iodide + A + H(+) = 3,3'-diiodothyronamine + AH2. It catalyses the reaction thyronamine + iodide + A + H(+) = 3-iodothyronamine + AH2. In terms of biological role, plays a crucial role in the metabolism of thyroid hormones (TH) and has specific roles in TH activation and inactivation by deiodination. Catalyzes the deiodination of L-thyroxine (T4) to 3,3',5'-triiodothyronine (rT3) and 3,5,3'-triiodothyronine (T3) to 3,3'-diiodothyronine (3,3'-T2) via inner-ring deiodination (IRD). Catalyzes the deiodination of rT3 to 3',5'-diiodothyronine (3',5'-T2), 3,3'-T2 to 3'-monoiodothyronine (3'-T1) and 3,5-diiodothyronine (3,5-T2) to 3-monoiodothyronine (3-T1) via IRD. Catalyzes the deiodination of 3-T1 to L-thyronine (T0) via outer-ring deiodination (ORD). Catalyzes the tyrosyl ring deiodinations of 3,3',5,5'-tetraiodothyronamine, 3,3',5'-triiodothyronamine, 3,5,3'-triiodothyronamine, 3,5-diiodothyronamine, 3,3'-diiodothyronamine and 3-iodothyronamine. The chain is Thyroxine 5-deiodinase (DIO3) from Gallus gallus (Chicken).